A 247-amino-acid chain; its full sequence is Probable transcriptional regulatory protein ECA2494 (247 aa).

It belongs to the TACO1 family.

It is found in the cytoplasm. This is Probable transcriptional regulatory protein ECA2494 from Pectobacterium atrosepticum (strain SCRI 1043 / ATCC BAA-672) (Erwinia carotovora subsp. atroseptica).